A 693-amino-acid chain; its full sequence is Putative adenosylcobalamin-dependent ribonucleoside-triphosphate reductase (693 aa).

C90 and C386 are joined by a disulfide. Residues C375 and E377 contribute to the active site.

Belongs to the class II ribonucleoside-triphosphate reductase family. It depends on adenosylcob(III)alamin as a cofactor.

It catalyses the reaction a 2'-deoxyribonucleoside 5'-triphosphate + [thioredoxin]-disulfide + H2O = a ribonucleoside 5'-triphosphate + [thioredoxin]-dithiol. In Mycobacterium phage D29 (Mycobacteriophage D29), this protein is Putative adenosylcobalamin-dependent ribonucleoside-triphosphate reductase (50).